The following is a 318-amino-acid chain: ADP-L-glycero-D-manno-heptose-6-epimerase (318 aa).

NADP(+) contacts are provided by residues Phe10 to Ile11, Asp31 to Asp32, Lys38, Lys53, Glu80 to Ser84, and Asn97. Tyr144 serves as the catalytic Proton acceptor. Position 148 (Lys148) interacts with NADP(+). Residue Asn173 coordinates substrate. Positions 174 and 182 each coordinate NADP(+). Catalysis depends on Lys182, which acts as the Proton acceptor. Residues Lys184, His191, Phe205 to Trp208, Arg218, and Tyr282 contribute to the substrate site.

The protein belongs to the NAD(P)-dependent epimerase/dehydratase family. HldD subfamily. In terms of assembly, homopentamer. Requires NADP(+) as cofactor.

The catalysed reaction is ADP-D-glycero-beta-D-manno-heptose = ADP-L-glycero-beta-D-manno-heptose. The protein operates within nucleotide-sugar biosynthesis; ADP-L-glycero-beta-D-manno-heptose biosynthesis; ADP-L-glycero-beta-D-manno-heptose from D-glycero-beta-D-manno-heptose 7-phosphate: step 4/4. Functionally, catalyzes the interconversion between ADP-D-glycero-beta-D-manno-heptose and ADP-L-glycero-beta-D-manno-heptose via an epimerization at carbon 6 of the heptose. In Chromohalobacter salexigens (strain ATCC BAA-138 / DSM 3043 / CIP 106854 / NCIMB 13768 / 1H11), this protein is ADP-L-glycero-D-manno-heptose-6-epimerase.